The sequence spans 137 residues: MILSFEYINSFNRLIPICDSCSNYPIGSYVATYIRLFGKNEFEEKGIYDDIVNISIENEFVGFDGIDAFIEGDKVRIGFYLYGKGDEPEDYDPEESEFEIIDRKELIYILKRWKVFIHKPITDPHYQEIIDTKEAYL.

This sequence belongs to the UPF0275 family.

In Pasteurella multocida (strain Pm70), this protein is UPF0275 protein PM0489.